The primary structure comprises 361 residues: DNA replication and repair protein RecF (361 aa).

30–37 serves as a coordination point for ATP; it reads GDNAQGKT.

It belongs to the RecF family.

It localises to the cytoplasm. In terms of biological role, the RecF protein is involved in DNA metabolism; it is required for DNA replication and normal SOS inducibility. RecF binds preferentially to single-stranded, linear DNA. It also seems to bind ATP. This is DNA replication and repair protein RecF from Clostridium botulinum (strain Alaska E43 / Type E3).